Reading from the N-terminus, the 399-residue chain is Elongation factor Tu (399 aa).

Residues 10-207 (KPHLNIGTIG…AVDNYVPEPQ (198 aa)) form the tr-type G domain. The tract at residues 19–26 (GHIDHGKT) is G1. A GTP-binding site is contributed by 19–26 (GHIDHGKT). Thr26 contributes to the Mg(2+) binding site. The interval 60-64 (GITIN) is G2. The tract at residues 81–84 (DCPG) is G3. GTP-binding positions include 81–85 (DCPGH) and 136–139 (NKVD). Residues 136 to 139 (NKVD) are G4. A G5 region spans residues 174–176 (SAL).

Belongs to the TRAFAC class translation factor GTPase superfamily. Classic translation factor GTPase family. EF-Tu/EF-1A subfamily. Monomer.

Its subcellular location is the cytoplasm. The catalysed reaction is GTP + H2O = GDP + phosphate + H(+). Functionally, GTP hydrolase that promotes the GTP-dependent binding of aminoacyl-tRNA to the A-site of ribosomes during protein biosynthesis. The chain is Elongation factor Tu from Kosmotoga olearia (strain ATCC BAA-1733 / DSM 21960 / TBF 19.5.1).